The following is a 281-amino-acid chain: Undecaprenyl-diphosphatase (281 aa).

7 helical membrane passes run 4 to 24 (ILLLKAVILGVVEGLTEFLPI), 46 to 63 (AFEVIIQFGAILAVCWEF), 83 to 103 (FVLNLFIASIPAMGLGFLFGK), 108 to 128 (VLFSPIPVASAFIVGTLIIFW), 187 to 207 (AVATEFSFFLAIPVIGGATAY), 222 to 242 (EFTLAIVVGFIAAFISAFVCV), and 257 to 277 (FAWYRIAFGILVLFTSYTGLI).

This sequence belongs to the UppP family.

The protein resides in the cell inner membrane. It carries out the reaction di-trans,octa-cis-undecaprenyl diphosphate + H2O = di-trans,octa-cis-undecaprenyl phosphate + phosphate + H(+). Functionally, catalyzes the dephosphorylation of undecaprenyl diphosphate (UPP). Confers resistance to bacitracin. The polypeptide is Undecaprenyl-diphosphatase (Polynucleobacter necessarius subsp. necessarius (strain STIR1)).